Reading from the N-terminus, the 714-residue chain is Polyribonucleotide nucleotidyltransferase (714 aa).

Residues Asp-489 and Asp-495 each contribute to the Mg(2+) site. The 60-residue stretch at Pro-556–Ile-615 folds into the KH domain. In terms of domain architecture, S1 motif spans Gly-625 to Lys-693. Positions Ser-691 to Asp-714 are disordered. Basic and acidic residues predominate over residues Pro-700–Asp-714.

The protein belongs to the polyribonucleotide nucleotidyltransferase family. It depends on Mg(2+) as a cofactor.

It localises to the cytoplasm. It carries out the reaction RNA(n+1) + phosphate = RNA(n) + a ribonucleoside 5'-diphosphate. Functionally, involved in mRNA degradation. Catalyzes the phosphorolysis of single-stranded polyribonucleotides processively in the 3'- to 5'-direction. This is Polyribonucleotide nucleotidyltransferase from Streptococcus equi subsp. equi (strain 4047).